The chain runs to 414 residues: Patatin-like protein 1 (414 aa).

The region spanning 22–228 is the PNPLA domain; the sequence is LSLDGGGVRG…TANNPTLVAM (207 aa). A GXGXXG motif is present at residues 26–31; the sequence is GGGVRG. Residues 64–68 carry the GXSXG motif; the sequence is GTSTG. The active-site Nucleophile is the S66. The active-site Proton acceptor is the D215. The DGA/G motif lies at 215 to 217; it reads DGA. S399 carries the post-translational modification Phosphoserine.

It belongs to the patatin family. Post-translationally, phosphorylated at Ser-399 by CPK3. Phosphorylation enhances PLP1 activity towards phosphatidylcholine. As to expression, expressed specifically in roots and root hairs.

Its subcellular location is the cytoplasm. Functionally, possesses non-specific lipolytic acyl hydrolase (LAH) activity. Catalyzes the hydrolysis of the neutral lipids monogalactosyldiacylglycerol (MGDG), digalactosyldiacylglycerol (DGDG) and phosphatidylglycerol (PG), and less efficiently the polar lipids phosphatidylcholine (PC) and phosphatidylinositol (PI), but not the storage lipid triacylglycerol (TAG). May play a role in root development. In Arabidopsis thaliana (Mouse-ear cress), this protein is Patatin-like protein 1 (PLP1).